A 157-amino-acid polypeptide reads, in one-letter code: Serine-protein kinase RsbW (157 aa).

This sequence belongs to the anti-sigma-factor family.

The catalysed reaction is L-seryl-[protein] + ATP = O-phospho-L-seryl-[protein] + ADP + H(+). It carries out the reaction L-threonyl-[protein] + ATP = O-phospho-L-threonyl-[protein] + ADP + H(+). In terms of biological role, negative regulator of sigma-B activity. Phosphorylates and inactivates its specific antagonist protein, RsbV. Upon phosphorylation of RsbV, RsbW is released and binds to sigma-B, thereby blocking its ability to form an RNA polymerase holoenzyme (E-sigma-B). The chain is Serine-protein kinase RsbW from Listeria monocytogenes serotype 4b (strain CLIP80459).